Reading from the N-terminus, the 309-residue chain is 2-dehydropantoate 2-reductase (309 aa).

Residues 7-12 (GAGSIG), Arg-31, and Lys-74 each bind NADP(+). Residues 8-10 (AGS), Arg-31, Lys-74, and Cys-84 each bind CoA. 2 residues coordinate NADP(+): Asn-100 and Ala-124. The active-site Proton donor is Lys-180. Substrate contacts are provided by residues Lys-180, Asn-184, Asn-188, Asn-198, and 247-250 (NYNS). Residue Arg-257 coordinates CoA. Residue Glu-262 participates in NADP(+) binding.

The protein belongs to the ketopantoate reductase family. Homodimer.

The protein localises to the cytoplasm. The enzyme catalyses (R)-pantoate + NAD(+) = 2-dehydropantoate + NADH + H(+). It carries out the reaction (R)-pantoate + NADP(+) = 2-dehydropantoate + NADPH + H(+). It participates in cofactor biosynthesis; coenzyme A biosynthesis. Its activity is regulated as follows. Regulated by feedback inhibition by coenzyme A (CoA). CoA acts by competing with NAD(P)H. A disulfide bond is formed between CoA and Cys-84, which indicates an irreversible inhibition upon binding of CoA. In terms of biological role, catalyzes the NAD(P)H-dependent reduction of ketopantoate into pantoic acid. Prefers NADH rather than NADPH as the electron donor. The sequence is that of 2-dehydropantoate 2-reductase from Thermococcus kodakarensis (strain ATCC BAA-918 / JCM 12380 / KOD1) (Pyrococcus kodakaraensis (strain KOD1)).